The following is a 636-amino-acid chain: Chaperone protein DnaK (636 aa).

T198 carries the post-translational modification Phosphothreonine; by autocatalysis. The interval Y598–K636 is disordered. The span at Q603 to N625 shows a compositional bias: basic and acidic residues. Acidic residues predominate over residues V626–K636.

The protein belongs to the heat shock protein 70 family.

In terms of biological role, acts as a chaperone. This chain is Chaperone protein DnaK, found in Pelobacter propionicus (strain DSM 2379 / NBRC 103807 / OttBd1).